The following is a 241-amino-acid chain: PHD finger protein ALFIN-LIKE 1 (241 aa).

Ala2 is subject to N-acetylalanine. Residues 142–182 form a disordered region; the sequence is DGKPSMDLGSKSRNGVKRSIEGQTKSTPKLMEESYEDEDDE. The PHD-type zinc finger occupies 185–237; the sequence is DTLCGSCGGNYTNDEFWICCDVCERWYHGKCVKITPAKAESIKQYKCPSCCTK.

This sequence belongs to the Alfin family. As to quaternary structure, interacts with H3K4me3 and to a lesser extent with H3K4me2. In terms of tissue distribution, ubiquitously expressed.

The protein localises to the nucleus. In terms of biological role, histone-binding component that specifically recognizes H3 tails trimethylated on 'Lys-4' (H3K4me3), which mark transcription start sites of virtually all active genes. This is PHD finger protein ALFIN-LIKE 1 (AL1) from Arabidopsis thaliana (Mouse-ear cress).